The following is a 125-amino-acid chain: uncharacterized protein (125 aa).

This is an uncharacterized protein from Dictyostelium discoideum (Social amoeba).